Consider the following 79-residue polypeptide: Raniseptin-9 (79 aa).

The signal sequence occupies residues 1-22; the sequence is MAFLKKSLFLVLFLGIVSLSIC. A propeptide spanning residues 23-49 is cleaved from the precursor; it reads EEEKREGEEEEKQEEENEELSEEELRE. The interval 27–46 is disordered; it reads REGEEEEKQEEENEELSEEE. The segment covering 30–44 has biased composition (acidic residues); that stretch reads EEEEKQEEENEELSE.

Belongs to the frog skin active peptide (FSAP) family. Dermaseptin subfamily. As to expression, expressed by the skin glands.

Its subcellular location is the secreted. Its function is as follows. Has antibacterial activity. The chain is Raniseptin-9 from Boana raniceps (Chaco tree frog).